Consider the following 214-residue polypeptide: Ubiquitin-conjugating enzyme E2 21 (214 aa).

The UBC core domain maps to 21–168; it reads ARVTRKCKEV…AVYWTSYFAN (148 aa). Residue C106 is the Glycyl thioester intermediate of the active site. The region spanning 172–214 is the UBA domain; that stretch reads DVEPDFNRKVGRLIEMGIRETEAIVYLSCNNWKLEQALQFIFD.

Belongs to the ubiquitin-conjugating enzyme family.

The enzyme catalyses S-ubiquitinyl-[E1 ubiquitin-activating enzyme]-L-cysteine + [E2 ubiquitin-conjugating enzyme]-L-cysteine = [E1 ubiquitin-activating enzyme]-L-cysteine + S-ubiquitinyl-[E2 ubiquitin-conjugating enzyme]-L-cysteine.. It functions in the pathway protein modification; protein ubiquitination. In terms of biological role, acts with E3 ubiquitin-protein ligase trim-21 to catalyze the 'Lys-48'-linked polyubiquitination of ced-1, promoting its proteasomal degradation to maintain appropriate ced-1 levels for apoptotic cell clearance. This Caenorhabditis elegans protein is Ubiquitin-conjugating enzyme E2 21 (ubc-21).